We begin with the raw amino-acid sequence, 1167 residues long: Chromosome partition protein Smc (1167 aa).

32–39 (PNGCGKSN) lines the ATP pocket. Coiled-coil stretches lie at residues 170 to 274 (ISKY…RIET), 310 to 390 (QREL…HNRD), 468 to 500 (GLQEQQRASQGELAEVRKQAQAARGRLSSLETL), 653 to 870 (ALLR…ERAL), and 982 to 1011 (EYLDAQNLDLNTALETLEEAIRKIDRETRG).

The protein belongs to the SMC family. Homodimer.

The protein localises to the cytoplasm. Its function is as follows. Required for chromosome condensation and partitioning. In Xanthomonas oryzae pv. oryzae (strain KACC10331 / KXO85), this protein is Chromosome partition protein Smc.